The chain runs to 232 residues: Octanoyltransferase (232 aa).

A BPL/LPL catalytic domain is found at 44–219; the sequence is EHTADEVWVV…QLARQFGLVL (176 aa). Residues 83 to 90, 150 to 152, and 163 to 165 contribute to the substrate site; these read RGGQVTYH, ALG, and GLS. C181 functions as the Acyl-thioester intermediate in the catalytic mechanism.

This sequence belongs to the LipB family.

It localises to the cytoplasm. The catalysed reaction is octanoyl-[ACP] + L-lysyl-[protein] = N(6)-octanoyl-L-lysyl-[protein] + holo-[ACP] + H(+). Its pathway is protein modification; protein lipoylation via endogenous pathway; protein N(6)-(lipoyl)lysine from octanoyl-[acyl-carrier-protein]: step 1/2. Its function is as follows. Catalyzes the transfer of endogenously produced octanoic acid from octanoyl-acyl-carrier-protein onto the lipoyl domains of lipoate-dependent enzymes. Lipoyl-ACP can also act as a substrate although octanoyl-ACP is likely to be the physiological substrate. The polypeptide is Octanoyltransferase (Xanthomonas euvesicatoria pv. vesicatoria (strain 85-10) (Xanthomonas campestris pv. vesicatoria)).